A 494-amino-acid chain; its full sequence is UDP-N-acetylmuramoyl-L-alanyl-D-glutamate--L-lysine ligase (494 aa).

Ser-30 serves as a coordination point for UDP-N-acetyl-alpha-D-muramoyl-L-alanyl-D-glutamate. 110-116 is a binding site for ATP; it reads GTNGKTS. UDP-N-acetyl-alpha-D-muramoyl-L-alanyl-D-glutamate-binding positions include 152-153, Ser-179, and Arg-187; that span reads TT. At Lys-219 the chain carries N6-carboxylysine. Positions 406 to 409 match the L-lysine recognition motif motif; the sequence is DNPA.

Belongs to the MurCDEF family. MurE subfamily. Carboxylation is probably crucial for Mg(2+) binding and, consequently, for the gamma-phosphate positioning of ATP.

It localises to the cytoplasm. It carries out the reaction UDP-N-acetyl-alpha-D-muramoyl-L-alanyl-D-glutamate + L-lysine + ATP = UDP-N-acetyl-alpha-D-muramoyl-L-alanyl-gamma-D-glutamyl-L-lysine + ADP + phosphate + H(+). It functions in the pathway cell wall biogenesis; peptidoglycan biosynthesis. In terms of biological role, catalyzes the addition of L-lysine to the nucleotide precursor UDP-N-acetylmuramoyl-L-alanyl-D-glutamate (UMAG) in the biosynthesis of bacterial cell-wall peptidoglycan. This Staphylococcus aureus (strain bovine RF122 / ET3-1) protein is UDP-N-acetylmuramoyl-L-alanyl-D-glutamate--L-lysine ligase.